We begin with the raw amino-acid sequence, 163 residues long: Steroid receptor-associated and regulated protein (163 aa).

Over residues 1–16 (MAFSKDPRRTSLRDSS) the composition is skewed to basic and acidic residues. Disordered stretches follow at residues 1 to 30 (MAFS…CAPK) and 96 to 149 (ALDG…EKVK). The segment covering 17 to 26 (VEMSSGTQPS) has biased composition (polar residues).

As to quaternary structure, interacts with 14-3-3 proteins.

Its function is as follows. May regulate the transcriptional function of androgen and estrogen receptors. In Mus musculus (Mouse), this protein is Steroid receptor-associated and regulated protein.